Here is a 594-residue protein sequence, read N- to C-terminus: Tripeptidyl-peptidase sed4 (594 aa).

The signal sequence occupies residues 1–20 (MLSSTLYAGWLLSLAAPALC). Positions 21–187 (VVQEKLSAVP…AVKLPALPRR (167 aa)) are cleaved as a propeptide — removed in mature form. Residues Asn-191, Asn-229, and Asn-250 are each glycosylated (N-linked (GlcNAc...) asparagine). The region spanning 197–594 (LITPDCLVEM…MKLKELVLSL (398 aa)) is the Peptidase S53 domain. Residues Glu-272, Asp-276, and Ser-494 each act as charge relay system in the active site. 2 residues coordinate Ca(2+): Asp-536 and Ile-537. N-linked (GlcNAc...) asparagine glycosylation occurs at Asn-568. Residues Gly-572 and Asp-574 each coordinate Ca(2+).

The cofactor is Ca(2+). Post-translationally, N-glycosylated.

The protein resides in the secreted. The protein localises to the extracellular space. The enzyme catalyses Release of an N-terminal tripeptide from a polypeptide.. In terms of biological role, secreted tripeptidyl-peptidase which degrades proteins at acidic pHs and is involved in virulence. The chain is Tripeptidyl-peptidase sed4 (sed4) from Aspergillus fumigatus (strain ATCC MYA-4609 / CBS 101355 / FGSC A1100 / Af293) (Neosartorya fumigata).